The sequence spans 302 residues: Vacuolar iron transporter (302 aa).

The Cytoplasmic segment spans residues Met1 to Lys70. The helical transmembrane segment at Ala71–Val91 threads the bilayer. The Vacuolar portion of the chain corresponds to Gly92 to Gln99. Residues Val100–Tyr120 form a helical membrane-spanning segment. Residues Val121–Ala211 lie on the Cytoplasmic side of the membrane. Glu137, Glu140, Glu148, Glu151, Met185, and Glu189 together coordinate Fe cation. Residues Phe212 to Leu232 traverse the membrane as a helical segment. Over Gly233–Glu235 the chain is Vacuolar. The helical transmembrane segment at Ala236–Phe256 threads the bilayer. The Cytoplasmic segment spans residues Ser257–Asn276. The chain crosses the membrane as a helical span at residues Gly277–Ala297. Residues Asn298 to Ala302 lie on the Vacuolar side of the membrane.

Belongs to the CCC1 family.

Its subcellular location is the vacuole membrane. It catalyses the reaction Fe(2+)(in) = Fe(2+)(out). In terms of biological role, vacuolar iron transporter involved in the transfer of iron ions from the cytosol to the vacuole for intracellular iron storage. Plays an essential role in detoxification of excess iron. Important for parasite survival within macrophages and parasite virulence in vivo. In Toxoplasma gondii (strain ATCC 50861 / VEG), this protein is Vacuolar iron transporter.